The following is a 720-amino-acid chain: Mitogen-activated protein kinase 6 (720 aa).

A Peptide (Met-Gly) (interchain with G-Cter in ubiquitin) cross-link involves residue methionine 1. The 297-residue stretch at 20–316 (YMDLKPLGCG…AEEALSHPYM (297 aa)) folds into the Protein kinase domain. Residues 26–34 (LGCGGNGLV) and lysine 49 contribute to the ATP site. The active-site Proton acceptor is aspartate 152. Serine 189 is subject to Phosphoserine; by PAK1, PAK2 and PAK3. The SEG motif motif lies at 189–191 (SEG). The FRIEDE motif motif lies at 332-337 (FHIEDE). Phosphoserine is present on residues serine 386, serine 452, serine 554, and serine 556. Residues 638 to 657 (SEMLETEPVEEGKRGERGRE) are disordered. Residues 647-657 (EEGKRGERGRE) are compositionally biased toward basic and acidic residues. At serine 683 the chain carries Phosphoserine. Over residues 698-714 (PSAMKSSPQIPHKTYSN) the composition is skewed to polar residues. Residues 698–720 (PSAMKSSPQIPHKTYSNILKHLN) are disordered.

The protein belongs to the protein kinase superfamily. CMGC Ser/Thr protein kinase family. MAP kinase subfamily. Heterodimer with ERK4/MAPK4. Interacts with (via FRIEDE motif) MAPKAPK5. Interacts with UBE3A; this interaction may be indirect and mediated by HERC2, possibly via HERC2 interaction with NEURL4. Mg(2+) is required as a cofactor. In terms of processing, phosphorylated at Ser-189 by PAK1, PAK2 and PAK3 resulting in catalytic activation. Phosphorylated by MAPKAPK5 at other sites. Post-translationally, ubiquitination at Met-1 leads to degradation by the proteasome pathway. In terms of tissue distribution, highest levels within the nervous system, expressed in different tissues, mostly in skeletal muscle.

It is found in the cytoplasm. It localises to the nucleus. It catalyses the reaction L-seryl-[protein] + ATP = O-phospho-L-seryl-[protein] + ADP + H(+). The enzyme catalyses L-threonyl-[protein] + ATP = O-phospho-L-threonyl-[protein] + ADP + H(+). With respect to regulation, activated by phosphorylation at Ser-189. Its function is as follows. Atypical MAPK protein. Phosphorylates microtubule-associated protein 2 (MAP2) and MAPKAPK5. The precise role of the complex formed with MAPKAPK5 is still unclear, but the complex follows a complex set of phosphorylation events: upon interaction with atypical MAPKAPK5, ERK3/MAPK6 is phosphorylated at Ser-189 and then mediates phosphorylation and activation of MAPKAPK5, which in turn phosphorylates ERK3/MAPK6. May promote entry in the cell cycle. This is Mitogen-activated protein kinase 6 (Mapk6) from Rattus norvegicus (Rat).